A 247-amino-acid polypeptide reads, in one-letter code: NAD-dependent protein deacetylase (247 aa).

One can recognise a Deacetylase sirtuin-type domain in the interval 1–247 (METFKSILHE…EFARSLGMKK (247 aa)). Residues alanine 20, threonine 24, phenylalanine 31, arginine 32, glutamine 100, isoleucine 102, aspartate 103, and histidine 118 each contribute to the NAD(+) site. Phenylalanine 31 contributes to the nicotinamide binding site. Nicotinamide is bound by residues isoleucine 102 and aspartate 103. The Proton acceptor role is filled by histidine 118. 4 residues coordinate Zn(2+): cysteine 126, cysteine 129, cysteine 146, and cysteine 156. Positions 192, 193, 218, and 236 each coordinate NAD(+).

The protein belongs to the sirtuin family. Class U subfamily. It depends on Zn(2+) as a cofactor.

The protein localises to the cytoplasm. The catalysed reaction is N(6)-acetyl-L-lysyl-[protein] + NAD(+) + H2O = 2''-O-acetyl-ADP-D-ribose + nicotinamide + L-lysyl-[protein]. In terms of biological role, NAD-dependent protein deacetylase which modulates the activities of several enzymes which are inactive in their acetylated form. This is NAD-dependent protein deacetylase from Bacillus subtilis (strain 168).